Here is a 445-residue protein sequence, read N- to C-terminus: Glutamate--tRNA ligase 2 (445 aa).

Positions 10–20 (PSPTGMLHVGN) match the 'HIGH' region motif. The 'KMSKS' region motif lies at 240–244 (KISKR). Residue K243 coordinates ATP.

It belongs to the class-I aminoacyl-tRNA synthetase family. Glutamate--tRNA ligase type 1 subfamily. In terms of assembly, monomer.

Its subcellular location is the cytoplasm. It carries out the reaction tRNA(Glu) + L-glutamate + ATP = L-glutamyl-tRNA(Glu) + AMP + diphosphate. Functionally, catalyzes the attachment of glutamate to tRNA(Glu) in a two-step reaction: glutamate is first activated by ATP to form Glu-AMP and then transferred to the acceptor end of tRNA(Glu). This is Glutamate--tRNA ligase 2 from Rickettsia canadensis (strain McKiel).